The chain runs to 61 residues: Small ribosomal subunit protein uS14B (61 aa).

C24, C27, C40, and C43 together coordinate Zn(2+).

The protein belongs to the universal ribosomal protein uS14 family. Zinc-binding uS14 subfamily. Part of the 30S ribosomal subunit. Contacts proteins S3 and S10. Zn(2+) serves as cofactor.

Its function is as follows. Binds 16S rRNA, required for the assembly of 30S particles and may also be responsible for determining the conformation of the 16S rRNA at the A site. This is Small ribosomal subunit protein uS14B from Bacillus velezensis (strain DSM 23117 / BGSC 10A6 / LMG 26770 / FZB42) (Bacillus amyloliquefaciens subsp. plantarum).